The chain runs to 284 residues: Bifunctional protein FolD (284 aa).

Residues 166–168 and Ser-191 contribute to the NADP(+) site; that span reads GRS.

Belongs to the tetrahydrofolate dehydrogenase/cyclohydrolase family. As to quaternary structure, homodimer.

The catalysed reaction is (6R)-5,10-methylene-5,6,7,8-tetrahydrofolate + NADP(+) = (6R)-5,10-methenyltetrahydrofolate + NADPH. It carries out the reaction (6R)-5,10-methenyltetrahydrofolate + H2O = (6R)-10-formyltetrahydrofolate + H(+). The protein operates within one-carbon metabolism; tetrahydrofolate interconversion. Catalyzes the oxidation of 5,10-methylenetetrahydrofolate to 5,10-methenyltetrahydrofolate and then the hydrolysis of 5,10-methenyltetrahydrofolate to 10-formyltetrahydrofolate. The protein is Bifunctional protein FolD of Delftia acidovorans (strain DSM 14801 / SPH-1).